The primary structure comprises 503 residues: Maturase K (503 aa).

This sequence belongs to the intron maturase 2 family. MatK subfamily.

The protein resides in the plastid. Its subcellular location is the chloroplast. Functionally, usually encoded in the trnK tRNA gene intron. Probably assists in splicing its own and other chloroplast group II introns. The polypeptide is Maturase K (Cercocarpus betuloides (Mountain mahogany)).